The primary structure comprises 427 residues: Cysteate synthase (427 aa).

Position 104 is an N6-(pyridoxal phosphate)lysine (Lys104). Pyridoxal 5'-phosphate contacts are provided by Asn130 and Thr382.

It belongs to the threonine synthase family. Cysteate synthase subfamily. In terms of assembly, homotrimer. Pyridoxal 5'-phosphate is required as a cofactor.

The enzyme catalyses O-phospho-L-serine + sulfite + H(+) = L-cysteate + phosphate. It functions in the pathway cofactor biosynthesis; coenzyme M biosynthesis. Its function is as follows. Specifically catalyzes the beta-elimination of phosphate from L-phosphoserine and the beta-addition of sulfite to the dehydroalanine intermediate to produce L-cysteate. The chain is Cysteate synthase from Methanocella paludicola (strain DSM 17711 / JCM 13418 / NBRC 101707 / SANAE).